The following is a 222-amino-acid chain: Germin-like protein subfamily 1 member 14 (222 aa).

The signal sequence occupies residues 1–22 (MRFSKSLILITLSALVISFAEA). Residues C32 and C49 are joined by a disulfide bond. The 152-residue stretch at 63–214 (SGLNQAGTTN…AFQLDVNVVK (152 aa)) folds into the Cupin type-1 domain. N-linked (GlcNAc...) asparagine glycosylation is present at N78. Mn(2+)-binding residues include H111, H113, E118, and H160.

Belongs to the germin family. In terms of assembly, oligomer (believed to be a pentamer but probably hexamer).

The protein localises to the secreted. Its subcellular location is the extracellular space. It is found in the apoplast. Functionally, may play a role in plant defense. Probably has no oxalate oxidase activity even if the active site is conserved. The sequence is that of Germin-like protein subfamily 1 member 14 from Arabidopsis thaliana (Mouse-ear cress).